The following is a 378-amino-acid chain: UDP-N-acetylglucosamine--N-acetylmuramyl-(pentapeptide) pyrophosphoryl-undecaprenol N-acetylglucosamine transferase (378 aa).

UDP-N-acetyl-alpha-D-glucosamine contacts are provided by residues 24 to 26 (TAG), Asn-144, Arg-181, Ser-215, and Gln-310.

Belongs to the glycosyltransferase 28 family. MurG subfamily.

The protein localises to the cell membrane. It catalyses the reaction di-trans,octa-cis-undecaprenyl diphospho-N-acetyl-alpha-D-muramoyl-L-alanyl-D-glutamyl-meso-2,6-diaminopimeloyl-D-alanyl-D-alanine + UDP-N-acetyl-alpha-D-glucosamine = di-trans,octa-cis-undecaprenyl diphospho-[N-acetyl-alpha-D-glucosaminyl-(1-&gt;4)]-N-acetyl-alpha-D-muramoyl-L-alanyl-D-glutamyl-meso-2,6-diaminopimeloyl-D-alanyl-D-alanine + UDP + H(+). The protein operates within cell wall biogenesis; peptidoglycan biosynthesis. Functionally, cell wall formation. Catalyzes the transfer of a GlcNAc subunit on undecaprenyl-pyrophosphoryl-MurNAc-pentapeptide (lipid intermediate I) to form undecaprenyl-pyrophosphoryl-MurNAc-(pentapeptide)GlcNAc (lipid intermediate II). This is UDP-N-acetylglucosamine--N-acetylmuramyl-(pentapeptide) pyrophosphoryl-undecaprenol N-acetylglucosamine transferase from Nocardia farcinica (strain IFM 10152).